Reading from the N-terminus, the 887-residue chain is Degenerin-like protein unc-105 (887 aa).

Positions 1 to 33 (MAEDRIKSKLRRPASIESTMSSRTKPRHKPSPM) are disordered. Over 1 to 93 (MAEDRIKSKL…AATADGKWRW (93 aa)) the chain is Cytoplasmic. A helical transmembrane segment spans residues 94-114 (FWYTAFTICLLALLIQIFFLI). Topologically, residues 115 to 698 (SKYRQYGKTV…SVLADLGGLT (584 aa)) are extracellular. Residues asparagine 244, asparagine 450, asparagine 473, asparagine 581, and asparagine 599 are each glycosylated (N-linked (GlcNAc...) asparagine). Residues 699-719 (GLWIGASVVSLLEIVTLIVFA) traverse the membrane as a helical segment. Over 720-887 (TQAYVRKRKG…YSAPYEHRKK (168 aa)) the chain is Cytoplasmic. Disordered regions lie at residues 794–815 (AIQEQSDDEEETTESSRTNGSC) and 859–887 (SNSEEEDAEDEVHREPEPFYSAPYEHRKK).

This sequence belongs to the amiloride-sensitive sodium channel (TC 1.A.6) family. In terms of tissue distribution, expressed in body wall muscle.

The protein resides in the membrane. In terms of biological role, ion channel which is permeable to small monovalent cations. Shown not to be H+-ion gated. May be mechanosensitive and is required for growth and muscle development. The sequence is that of Degenerin-like protein unc-105 (unc-105) from Caenorhabditis elegans.